The following is a 261-amino-acid chain: tRNA (guanine-N(7)-)-methyltransferase (261 aa).

Residues E75, E100, D127, and D150 each contribute to the S-adenosyl-L-methionine site. The active site involves D150. K154 contributes to the substrate binding site. Residues R156–R161 form an interaction with RNA region. Residues D186 and T223 to E226 contribute to the substrate site.

The protein belongs to the class I-like SAM-binding methyltransferase superfamily. TrmB family.

The enzyme catalyses guanosine(46) in tRNA + S-adenosyl-L-methionine = N(7)-methylguanosine(46) in tRNA + S-adenosyl-L-homocysteine. The protein operates within tRNA modification; N(7)-methylguanine-tRNA biosynthesis. In terms of biological role, catalyzes the formation of N(7)-methylguanine at position 46 (m7G46) in tRNA. This is tRNA (guanine-N(7)-)-methyltransferase from Xanthomonas axonopodis pv. citri (strain 306).